A 368-amino-acid polypeptide reads, in one-letter code: 4-hydroxy-3-methylbut-2-en-1-yl diphosphate synthase (flavodoxin) (368 aa).

[4Fe-4S] cluster is bound by residues Cys271, Cys274, Cys306, and Glu313.

It belongs to the IspG family. Requires [4Fe-4S] cluster as cofactor.

It catalyses the reaction (2E)-4-hydroxy-3-methylbut-2-enyl diphosphate + oxidized [flavodoxin] + H2O + 2 H(+) = 2-C-methyl-D-erythritol 2,4-cyclic diphosphate + reduced [flavodoxin]. It functions in the pathway isoprenoid biosynthesis; isopentenyl diphosphate biosynthesis via DXP pathway; isopentenyl diphosphate from 1-deoxy-D-xylulose 5-phosphate: step 5/6. In terms of biological role, converts 2C-methyl-D-erythritol 2,4-cyclodiphosphate (ME-2,4cPP) into 1-hydroxy-2-methyl-2-(E)-butenyl 4-diphosphate. The protein is 4-hydroxy-3-methylbut-2-en-1-yl diphosphate synthase (flavodoxin) of Haemophilus influenzae (strain 86-028NP).